The chain runs to 399 residues: Glycosyltransferase BC10 (399 aa).

Residues methionine 1–lysine 17 are Cytoplasmic-facing. A helical; Signal-anchor for type II membrane protein membrane pass occupies residues proline 18 to leucine 38. Over histidine 39–methionine 399 the chain is Lumenal. Residues asparagine 142 and asparagine 188 are each glycosylated (N-linked (GlcNAc...) asparagine).

This sequence belongs to the glycosyltransferase 14 family. As to expression, expressed in roots, culms, leaves and panicles. Expressed in vascular bundles of leaf sheaths and stems where sclerenchyma cells are developing. Expressed in mechanical tissues of young organs, such as young leaf sheaths, stems and tiller buds.

It is found in the membrane. Glycosyltransferase required for the regulation of cellulose biosynthesis in the cell wall. Required for the biosynthesis of hexoses (glucose, mannose and galactose) in both cellulosic and non-cellulosic (pectins and hemicelluloses) components of cell walls. Required for the formation of arabinogalactan proteins which contribute to the strengthening of cell walls. Possesses low glycosyltransferase activity. The polypeptide is Glycosyltransferase BC10 (Oryza sativa subsp. japonica (Rice)).